Here is a 169-residue protein sequence, read N- to C-terminus: Hydroperoxy fatty acid reductase gpx1 (169 aa).

The active site involves Cys41.

The protein belongs to the glutathione peroxidase family. Monomer.

The catalysed reaction is a hydroperoxy polyunsaturated fatty acid + NADPH + H(+) = a hydroxy polyunsaturated fatty acid + NADP(+) + H2O. Its activity is regulated as follows. Mercaptosuccinate, pCMB, and nethylmaleimide act as inhibitors of the catalytic activity. Its function is as follows. Hydroperoxy fatty acid reductase essential for the removal of lipid hydroperoxides under normal and stress conditions, leading to the protection of membrane integrity. This Synechocystis sp. (strain ATCC 27184 / PCC 6803 / Kazusa) protein is Hydroperoxy fatty acid reductase gpx1 (gpx1).